The sequence spans 235 residues: Transmembrane protein 176A (235 aa).

Phosphoserine is present on S38. Helical transmembrane passes span V55 to F75, S86 to Y106, Y113 to L133, and A193 to Y213.

This sequence belongs to the TMEM176 family. As to quaternary structure, interacts with MCOLN2.

The protein resides in the membrane. The chain is Transmembrane protein 176A (TMEM176A) from Homo sapiens (Human).